A 387-amino-acid chain; its full sequence is Exodeoxyribonuclease 7 large subunit (387 aa).

This sequence belongs to the XseA family. Heterooligomer composed of large and small subunits.

The protein resides in the cytoplasm. The enzyme catalyses Exonucleolytic cleavage in either 5'- to 3'- or 3'- to 5'-direction to yield nucleoside 5'-phosphates.. Its function is as follows. Bidirectionally degrades single-stranded DNA into large acid-insoluble oligonucleotides, which are then degraded further into small acid-soluble oligonucleotides. The chain is Exodeoxyribonuclease 7 large subunit from Campylobacter jejuni subsp. jejuni serotype O:2 (strain ATCC 700819 / NCTC 11168).